The chain runs to 128 residues: Type-4 ice-structuring protein LS-12 (128 aa).

The first 20 residues, 1-20 (MKFSLVATIVLLALAQGSFA), serve as a signal peptide directing secretion. A Pyrrolidone carboxylic acid modification is found at glutamine 21.

The protein belongs to the apolipoprotein A1/A4/E family.

Its subcellular location is the secreted. Antifreeze proteins lower the blood freezing point. This chain is Type-4 ice-structuring protein LS-12, found in Myoxocephalus octodecemspinosus (Longhorn sculpin).